The primary structure comprises 256 residues: Rano class II histocompatibility antigen, B alpha chain (256 aa).

The N-terminal stretch at 1–23 (MPLSRALILGVLALTTMLSPCGG) is a signal peptide. Positions 24–111 (QDDIEADHVG…KRSNSTPAVN (88 aa)) are alpha-1. Topologically, residues 24 to 218 (QDDIEADHVG…IPAPMSELTE (195 aa)) are extracellular. In terms of domain architecture, Ig-like C1-type spans 108–206 (PAVNEVPEAT…LDEPVLRHWE (99 aa)). Positions 112-205 (EVPEATVFSK…SLDEPVLRHW (94 aa)) are alpha-2. Cysteines 134 and 190 form a disulfide. The N-linked (GlcNAc...) asparagine glycan is linked to N145. The connecting peptide stretch occupies residues 206–218 (EPEIPAPMSELTE). Residues 219–244 (TVVCALGLSVGLVGIVVGTIFIIQGL) traverse the membrane as a helical segment. Residues 245-256 (RSVAPSRHPGPL) are Cytoplasmic-facing.

It belongs to the MHC class II family.

It localises to the membrane. This chain is Rano class II histocompatibility antigen, B alpha chain (RT1-Ba), found in Rattus norvegicus (Rat).